A 346-amino-acid polypeptide reads, in one-letter code: Phosphoribosylformylglycinamidine cyclo-ligase (346 aa).

The protein belongs to the AIR synthase family.

It is found in the cytoplasm. It carries out the reaction 2-formamido-N(1)-(5-O-phospho-beta-D-ribosyl)acetamidine + ATP = 5-amino-1-(5-phospho-beta-D-ribosyl)imidazole + ADP + phosphate + H(+). Its pathway is purine metabolism; IMP biosynthesis via de novo pathway; 5-amino-1-(5-phospho-D-ribosyl)imidazole from N(2)-formyl-N(1)-(5-phospho-D-ribosyl)glycinamide: step 2/2. The chain is Phosphoribosylformylglycinamidine cyclo-ligase from Bacillus cereus (strain ZK / E33L).